Here is a 483-residue protein sequence, read N- to C-terminus: MEHYSLAQLSKALHNREFSSVELTQHCINKIQSNKDLNAFISLDEDQALKEAQSADLVLKSGEGKPLTGIPMALKDLFCTKRLNTTCASKMLANFQAPYDATIVTKFKQNGAIIIGKTNMDEFAMGSSNENSYFGSVKNPWDRERVSGGSSGGSAAAVAGNLVPFAIGSDTGGSIRQPAAFCGISGIKPTYGLVSRYGMVAFASSLDQAGPFAKSAEDLAMILHCMAGFDSKDSTSVDRVIPDYSAEIKNPVDKIRIGLPSCFFQPQVEKGIQDAIHDAVKLFENLGAEIIEIDLKLQPLWVPCYYVIACAEASSNLSRYDGIRFGHRSKSASTLIELITNSRSEGFGNEVKRRILTGTHVLSSGFFDAYYLHAQKVRRLIRDELITTLNSVDVILGPTTPTTAFKLGEKIDDPIQNYLADVFTVAANLAGLPAVSIPTGFENKLPIGLQLMSKHFSENRLLAIAHHYQQHTNWHLANPNKQR.

Residues K75 and S150 each act as charge relay system in the active site. S174 acts as the Acyl-ester intermediate in catalysis.

The protein belongs to the amidase family. GatA subfamily. In terms of assembly, heterotrimer of A, B and C subunits.

The catalysed reaction is L-glutamyl-tRNA(Gln) + L-glutamine + ATP + H2O = L-glutaminyl-tRNA(Gln) + L-glutamate + ADP + phosphate + H(+). Allows the formation of correctly charged Gln-tRNA(Gln) through the transamidation of misacylated Glu-tRNA(Gln) in organisms which lack glutaminyl-tRNA synthetase. The reaction takes place in the presence of glutamine and ATP through an activated gamma-phospho-Glu-tRNA(Gln). The polypeptide is Glutamyl-tRNA(Gln) amidotransferase subunit A (Legionella pneumophila subsp. pneumophila (strain Philadelphia 1 / ATCC 33152 / DSM 7513)).